The following is a 1374-amino-acid chain: Mitogen-activated protein kinase kinase kinase 5 (1374 aa).

A disordered region spans residues 68–87 (PAATSSSSATRGRGSSVGGG). Positions 69-81 (AATSSSSATRGRG) are enriched in low complexity. Residues R78 and R80 each carry the asymmetric dimethylarginine; by PRMT1 modification. S83 carries the phosphoserine; by PIM1 and PKB/AKT1 modification. Positions 649-1374 (MVNTITEEKG…AIIDFRNKQT (726 aa)) are interaction with PPIA/CYPA. The 259-residue stretch at 680–938 (NGDRVVLGKG…ANDLLVDEFL (259 aa)) folds into the Protein kinase domain. ATP is bound by residues 686–694 (LGKGTYGIV) and K709. Phosphotyrosine is present on Y718. D803 (proton acceptor) is an active-site residue. T813 is subject to Phosphothreonine; by autocatalysis. Position 838 is a phosphothreonine; by autocatalysis, MELK and MAP3K6 (T838). Residue T842 is modified to Phosphothreonine; by autocatalysis. At S958 the chain carries Phosphoserine. S966 is modified (phosphoserine; by autocatalysis). S1029 and S1033 each carry phosphoserine. A disordered region spans residues 1182–1209 (SESDTADQEDLDVEDDHEEQPSNQTVRR). The span at 1185–1199 (DTADQEDLDVEDDHE) shows a compositional bias: acidic residues. Residues 1245–1285 (LGRMKIETNRLLEELVRKEKELQALLHRAIEEKDQEIKHLK) adopt a coiled-coil conformation.

It belongs to the protein kinase superfamily. STE Ser/Thr protein kinase family. MAP kinase kinase kinase subfamily. In terms of assembly, homodimer when inactive. Binds both upstream activators and downstream substrates in multimolecular complexes. Part of a cytoplasmic complex made of HIPK1, DAB2IP and MAP3K5 in response to TNF. This complex formation promotes MAP3K5-JNK activation and subsequent apoptosis. Interacts with SOCS1 which recognizes phosphorylation of Tyr-718 and induces MAP3K5/ASK1 degradation in endothelial cells. Interacts with the 14-3-3 family proteins such as YWHAB, YWHAE, YWHAQ, YWHAH, YWHAZ and SFN. Interacts with ARRB2, BIRC2, DAB2IP, IGF1R, MAP3K6/ASK2, PGAM5, PIM1, PPP5C, SOCS1, STUB1, TRAF2, TRAF6 and TXN. Interacts with ERN1 in a TRAF2-dependent manner. Interacts with calcineurin subunit PPP3R1. Interacts with PPM1L. Interacts (via N-terminus) with RAF1 and this interaction inhibits the proapoptotic function of MAP3K5. Interacts with DAB2IP (via N-terminus C2 domain); the interaction occurs in a TNF-alpha-dependent manner. Interacts with DUSP13A; may positively regulate apoptosis. Interacts with DAXX. Interacts with RC3H2. Interacts with PPIA/CYPA. Interacts with PRMT1; the interaction results in MAP3K5 methylation by PRMT1 which inhibits MAP3K5 activation. Interacts with TRAF2; the interaction is inhibited by PRMT1. Interacts with TRIM48. (Microbial infection) Interacts with HIV-1 Nef; this interaction inhibits MAP3K5 signaling. Mg(2+) serves as cofactor. In terms of processing, phosphorylated at Thr-838 through autophosphorylation and by MAP3K6/ASK2 which leads to activation. Thr-838 is dephosphorylated by PPP5C. Ser-83 and Ser-1033 are inactivating phosphorylation sites, the former of which is phosphorylated by AKT1. Phosphorylated at Ser-966 which induces association of MAP3K5/ASK1 with the 14-3-3 family proteins and suppresses MAP3K5/ASK1 activity. Calcineurin (CN) dephosphorylates this site. Also dephosphorylated and activated by PGAM5. Phosphorylation at Ser-966 in response to oxidative stress is negatively regulated by PPIA/CYPA. Ubiquitinated. Tumor necrosis factor (TNF) induces TNFR2-dependent ubiquitination, leading to proteasomal degradation. Ubiquitinated by RC3H2 in a TRIM48-dependent manner. Post-translationally, methylation at Arg-78 and Arg-80 by PRMT1 promotes association of MAP3K5 with thioredoxin and negatively regulates MAP3K5 association with TRAF2, inhibiting MAP3K5 activation. Methylation is blocked by ubiquitination of PRMT1 by TRIM48. As to expression, abundantly expressed in heart and pancreas.

It localises to the cytoplasm. The protein localises to the endoplasmic reticulum. It catalyses the reaction L-seryl-[protein] + ATP = O-phospho-L-seryl-[protein] + ADP + H(+). It carries out the reaction L-threonyl-[protein] + ATP = O-phospho-L-threonyl-[protein] + ADP + H(+). Activated by various stressors, including oxidative stress, endoplasmic reticulum stress, and calcium overload, as well as by receptor-mediated inflammatory signals, such as the tumor necrosis factor (TNF) and lipopolysaccharide (LPS). Homophilic association of MAP3K5/ASK1 through the C-terminal coiled-coil domains and the heteromeric complex formation of MAP3K5/ASK1 with the reduced form of thioredoxin (TXN), constitutes an inactive form of the kinase. Upon ROS-induced dissociation of TXN from MAP3K5/ASK1, TRAF2 and TRAF6 are reciprocally recruited to MAP3K5/ASK1 and form the active MAP3K5/ASK1 signalosome, in which TRAF2 and TRAF6 appear to facilitate the active configuration of MAP3K5/ASK1. MAP3K5/ASK1 activity is also regulated through several phosphorylation and dephosphorylation events. Thr-838 is an activating phosphorylation site that is autophosphorylated and phosphorylated by MAP3K6/ASK2 and dephosphorylated by PPP5C. Ser-83 and Ser-1033 are inactivating phosphorylation sites, the former of which is phosphorylated by AKT1. Phosphorylation of Ser-966 induces association of MAP3K5/ASK1 with the 14-3-3 family proteins, which suppresses MAP3K5/ASK1 activity. Calcium/calmodulin-activated protein phosphatase calcineurin (PPP3CA) has been shown to directly dephosphorylate this site. SOCS1 binds to ASK1 by recognizing phosphorylation of Tyr-718 and induces MAP3K5/ASK1 degradation in endothelial cells. Also dephosphorylated and activated by PGAM5. Contains an N-terminal autoinhibitory domain. Once activated targeted for proteasomal degradation by RC3H2-mediated ubiquitination. Functionally, serine/threonine kinase which acts as an essential component of the MAP kinase signal transduction pathway. Plays an important role in the cascades of cellular responses evoked by changes in the environment. Mediates signaling for determination of cell fate such as differentiation and survival. Plays a crucial role in the apoptosis signal transduction pathway through mitochondria-dependent caspase activation. MAP3K5/ASK1 is required for the innate immune response, which is essential for host defense against a wide range of pathogens. Mediates signal transduction of various stressors like oxidative stress as well as by receptor-mediated inflammatory signals, such as the tumor necrosis factor (TNF) or lipopolysaccharide (LPS). Once activated, acts as an upstream activator of the MKK/JNK signal transduction cascade and the p38 MAPK signal transduction cascade through the phosphorylation and activation of several MAP kinase kinases like MAP2K4/SEK1, MAP2K3/MKK3, MAP2K6/MKK6 and MAP2K7/MKK7. These MAP2Ks in turn activate p38 MAPKs and c-jun N-terminal kinases (JNKs). Both p38 MAPK and JNKs control the transcription factors activator protein-1 (AP-1). This Homo sapiens (Human) protein is Mitogen-activated protein kinase kinase kinase 5 (MAP3K5).